The sequence spans 393 residues: Chalcone synthase DII (393 aa).

Residue Cys-164 is part of the active site.

The protein belongs to the thiolase-like superfamily. Chalcone/stilbene synthases family.

It catalyses the reaction (E)-4-coumaroyl-CoA + 3 malonyl-CoA + 3 H(+) = 2',4,4',6'-tetrahydroxychalcone + 3 CO2 + 4 CoA. It participates in secondary metabolite biosynthesis; flavonoid biosynthesis. Its function is as follows. The primary product of this enzyme is 4,2',4',6'-tetrahydroxychalcone (also termed naringenin-chalcone or chalcone) which can under specific conditions spontaneously isomerize into naringenin. This Ipomoea batatas (Sweet potato) protein is Chalcone synthase DII (CHS-DII).